The chain runs to 421 residues: MVILALNCGSSSVKYQLFDWEKKEVVAKGMVERVIIGDSFIMHEVPGRETYRKEYECPDHKVAIDLIIRTLVDGEHGVLKDINEISAVGHRVVHGGEMFTRSVLIDEKVLDAVKDVQHLAPLHNPPNIAGIEAAQAVLPSVPHVAIFDTAFHQTMPEHAYLYPLPYEWYEKYGVRRYGFHGTSHLFVSKRAAVLLGKKPSDCNIITMHIGNGVSHCAIRGGVSIDTSMGLTPLEGAVMGTRCGDIDPAIPAFMMQKENLSAKEIDSILNKKSGVLGVTGRFTDRRDVIENANNGDHRCKVALEIEAYRLKKYIGTYMAVLGRLDAVVFTAGVGEMGWPIREKTIEGLEGIGIKLDRERNKSAMTRKRETLITTDDSPIKVFVIPTDEELVFTEDVVAILDGTYTDHMNFDYSFARQDFVRS.

Position 7 (asparagine 7) interacts with Mg(2+). An ATP-binding site is contributed by lysine 14. Arginine 91 serves as a coordination point for substrate. Aspartate 148 acts as the Proton donor/acceptor in catalysis. Residues 208 to 212 and 283 to 285 each bind ATP; these read HIGNG and DRR. Glutamate 387 lines the Mg(2+) pocket.

Belongs to the acetokinase family. In terms of assembly, homodimer. Mg(2+) is required as a cofactor. The cofactor is Mn(2+).

It is found in the cytoplasm. It carries out the reaction acetate + ATP = acetyl phosphate + ADP. Its pathway is metabolic intermediate biosynthesis; acetyl-CoA biosynthesis; acetyl-CoA from acetate: step 1/2. Its function is as follows. Catalyzes the formation of acetyl phosphate from acetate and ATP. Can also catalyze the reverse reaction. The protein is Acetate kinase of Geobacter metallireducens (strain ATCC 53774 / DSM 7210 / GS-15).